The chain runs to 304 residues: Glutaminase (304 aa).

Substrate-binding residues include Ser63, Asn113, Glu157, Asn164, Tyr188, Tyr240, and Val258.

It belongs to the glutaminase family. Homotetramer.

It catalyses the reaction L-glutamine + H2O = L-glutamate + NH4(+). The sequence is that of Glutaminase from Paraburkholderia phytofirmans (strain DSM 17436 / LMG 22146 / PsJN) (Burkholderia phytofirmans).